The primary structure comprises 333 residues: Bacteriocin helveticin-J (333 aa).

Functionally, this heat-sensitive bacteriocin inhibits the growth of closely related Lactobacillus species. In Lactobacillus helveticus (Lactobacillus suntoryeus), this protein is Bacteriocin helveticin-J (hlv).